A 145-amino-acid polypeptide reads, in one-letter code: NADH dehydrogenase [ubiquinone] 1 alpha subcomplex subunit 12 (145 aa).

M1 is modified (N-acetylmethionine).

The protein belongs to the complex I NDUFA12 subunit family. Complex I is composed of 45 different subunits.

The protein localises to the mitochondrion inner membrane. Accessory subunit of the mitochondrial membrane respiratory chain NADH dehydrogenase (Complex I), that is believed not to be involved in catalysis. Complex I functions in the transfer of electrons from NADH to the respiratory chain. The immediate electron acceptor for the enzyme is believed to be ubiquinone. The chain is NADH dehydrogenase [ubiquinone] 1 alpha subcomplex subunit 12 (Ndufa12) from Mus musculus (Mouse).